A 59-amino-acid polypeptide reads, in one-letter code: Conotoxin ViVA (59 aa).

The N-terminal stretch at 1–19 is a signal peptide; it reads MRCVPVFIILLLLIPSASS. The propeptide occupies 20–46; the sequence is AAVQPKTEKDDVPLASVHDSALRILSR. Gln-47 carries the post-translational modification Pyrrolidone carboxylic acid. 2 disulfides stabilise this stretch: Cys-48-Cys-55 and Cys-49-Cys-56. Ile-58 is modified (isoleucine amide).

The protein belongs to the conotoxin T superfamily. In terms of tissue distribution, expressed by the venom duct.

It is found in the secreted. This chain is Conotoxin ViVA, found in Conus virgo (Virgin cone).